Consider the following 223-residue polypeptide: GrpE protein homolog, mitochondrial (223 aa).

This sequence belongs to the GrpE family. Component of the PAM complex, at least composed of mtHsp70, mge1, tim44, pam16, pam17 and pam18.

Its subcellular location is the mitochondrion matrix. Its function is as follows. Essential component of the PAM complex, a complex required for the translocation of transit peptide-containing proteins from the inner membrane into the mitochondrial matrix in an ATP-dependent manner. Seems to control the nucleotide-dependent binding of ssc1 to substrate proteins. The polypeptide is GrpE protein homolog, mitochondrial (mge1) (Schizosaccharomyces pombe (strain 972 / ATCC 24843) (Fission yeast)).